The sequence spans 293 residues: Ribosomal RNA small subunit methyltransferase H (293 aa).

Residues 32 to 34, D51, F78, D99, and Q106 each bind S-adenosyl-L-methionine; that span reads GGH. A disordered region spans residues 271-293; that stretch reads PGTEEIRENPPSRSAKLRVAKRI.

This sequence belongs to the methyltransferase superfamily. RsmH family.

The protein localises to the cytoplasm. It carries out the reaction cytidine(1402) in 16S rRNA + S-adenosyl-L-methionine = N(4)-methylcytidine(1402) in 16S rRNA + S-adenosyl-L-homocysteine + H(+). Functionally, specifically methylates the N4 position of cytidine in position 1402 (C1402) of 16S rRNA. The polypeptide is Ribosomal RNA small subunit methyltransferase H (Persephonella marina (strain DSM 14350 / EX-H1)).